The primary structure comprises 452 residues: Sodium-coupled neutral amino acid transporter 7 (452 aa).

Helical transmembrane passes span 46–66, 74–94, 120–140, 168–188, 195–215, 234–256, 272–292, 309–329, 361–381, 385–405, and 419–439; these read AVFI…PAAF, AAIS…VILA, LCEV…FIII, FTIS…REIS, FLSV…CIWP, VFNA…PVYG, IAMF…FLLF, IAVA…YPIL, VLQT…IPDI, ISLI…LCLI, and SWWA…FIFG.

Belongs to the amino acid/polyamine transporter 2 family.

It is found in the lysosome membrane. The protein resides in the cell projection. Its subcellular location is the axon. The enzyme catalyses L-asparagine(in) + Na(+)(in) = L-asparagine(out) + Na(+)(out). It carries out the reaction L-glutamine(in) + Na(+)(in) = L-glutamine(out) + Na(+)(out). Symporter that selectively cotransports sodium ions and amino acids, such as L-glutamine and L-asparagine from the lysosome into the cytoplasm and may participates in mTORC1 activation. The transport activity requires an acidic lysosomal lumen. The protein is Sodium-coupled neutral amino acid transporter 7 of Xenopus laevis (African clawed frog).